The sequence spans 113 residues: Pro-FMRFamide-related neuropeptide FF (113 aa).

The N-terminal stretch at Met-1–Cys-20 is a signal peptide. The propeptide occupies Ala-21–Arg-65. Positions Glu-22–Thr-48 are disordered. At Phe-76 the chain carries Phenylalanine amide. Positions Asn-79–Arg-92 are excised as a propeptide. At Phe-110 the chain carries Phenylalanine amide.

It belongs to the FARP (FMRFamide related peptide) family.

It localises to the secreted. Morphine modulating peptides. Have wide-ranging physiologic effects, including the modulation of morphine-induced analgesia, elevation of arterial blood pressure, and increased somatostatin secretion from the pancreas. Neuropeptide FF potentiates and sensitizes ASIC1 and ASIC3 channels. The chain is Pro-FMRFamide-related neuropeptide FF from Homo sapiens (Human).